Reading from the N-terminus, the 1242-residue chain is ATP-dependent helicase/nuclease subunit A (1242 aa).

The UvrD-like helicase ATP-binding domain maps to 12–487 (SRWTDEQWKA…IDLASNFRSR (476 aa)). Residue 33-40 (AAAGSGKT) participates in ATP binding. Residues 514 to 808 (AAQLKYGADY…RIMTIHSSKG (295 aa)) enclose the UvrD-like helicase C-terminal domain.

The protein belongs to the helicase family. AddA subfamily. Heterodimer of AddA and AddB/RexB. It depends on Mg(2+) as a cofactor.

The enzyme catalyses Couples ATP hydrolysis with the unwinding of duplex DNA by translocating in the 3'-5' direction.. The catalysed reaction is ATP + H2O = ADP + phosphate + H(+). The heterodimer acts as both an ATP-dependent DNA helicase and an ATP-dependent, dual-direction single-stranded exonuclease. Recognizes the chi site generating a DNA molecule suitable for the initiation of homologous recombination. The AddA nuclease domain is required for chi fragment generation; this subunit has the helicase and 3' -&gt; 5' nuclease activities. The sequence is that of ATP-dependent helicase/nuclease subunit A from Geobacillus kaustophilus (strain HTA426).